The following is a 95-amino-acid chain: Phosphoribosyl-ATP pyrophosphatase (95 aa).

Belongs to the PRA-PH family.

Its subcellular location is the cytoplasm. It carries out the reaction 1-(5-phospho-beta-D-ribosyl)-ATP + H2O = 1-(5-phospho-beta-D-ribosyl)-5'-AMP + diphosphate + H(+). Its pathway is amino-acid biosynthesis; L-histidine biosynthesis; L-histidine from 5-phospho-alpha-D-ribose 1-diphosphate: step 2/9. In Methanosphaera stadtmanae (strain ATCC 43021 / DSM 3091 / JCM 11832 / MCB-3), this protein is Phosphoribosyl-ATP pyrophosphatase.